Consider the following 437-residue polypeptide: Amino-acid acetyltransferase (437 aa).

An N-acetyltransferase domain is found at 289-429; that stretch reads ENIRLATSFD…EHYNYQRMSK (141 aa).

The protein belongs to the acetyltransferase family. ArgA subfamily.

The protein resides in the cytoplasm. The enzyme catalyses L-glutamate + acetyl-CoA = N-acetyl-L-glutamate + CoA + H(+). Its pathway is amino-acid biosynthesis; L-arginine biosynthesis; N(2)-acetyl-L-ornithine from L-glutamate: step 1/4. The sequence is that of Amino-acid acetyltransferase from Actinobacillus pleuropneumoniae serotype 3 (strain JL03).